The primary structure comprises 193 residues: Ion-translocating oxidoreductase complex subunit A (193 aa).

The next 6 helical transmembrane spans lie at 5–25 (LLLL…FLGL), 39–59 (MGMG…AWAV), 62–82 (FILV…LVIA), 102–122 (LLGI…VALL), 134–154 (AVYG…FAAI), and 171–191 (SIAL…SGLV).

Belongs to the NqrDE/RnfAE family. The complex is composed of six subunits: RnfA, RnfB, RnfC, RnfD, RnfE and RnfG.

Its subcellular location is the cell inner membrane. Its function is as follows. Part of a membrane-bound complex that couples electron transfer with translocation of ions across the membrane. The protein is Ion-translocating oxidoreductase complex subunit A of Edwardsiella ictaluri (strain 93-146).